Here is a 425-residue protein sequence, read N- to C-terminus: GTPase Obg (425 aa).

Residues 1 to 158 (MFRDSAKIYV…YSLILEMKMI (158 aa)) enclose the Obg domain. Residues 159–330 (ADVGLVGYPN…LLYAVSETLK (172 aa)) enclose the OBG-type G domain. GTP contacts are provided by residues 165–172 (GYPNVGKS), 190–194 (FTTLV), 212–215 (DIPG), 282–285 (NKMD), and 311–313 (SAA). Ser-172 and Thr-192 together coordinate Mg(2+). The OCT domain occupies 348 to 425 (YKVQEEKPFE…IYDTEFDYTR (78 aa)).

It belongs to the TRAFAC class OBG-HflX-like GTPase superfamily. OBG GTPase family. Monomer. It depends on Mg(2+) as a cofactor.

The protein resides in the cytoplasm. In terms of biological role, an essential GTPase which binds GTP, GDP and possibly (p)ppGpp with moderate affinity, with high nucleotide exchange rates and a fairly low GTP hydrolysis rate. Plays a role in control of the cell cycle, stress response, ribosome biogenesis and in those bacteria that undergo differentiation, in morphogenesis control. This Ruminiclostridium cellulolyticum (strain ATCC 35319 / DSM 5812 / JCM 6584 / H10) (Clostridium cellulolyticum) protein is GTPase Obg.